We begin with the raw amino-acid sequence, 122 residues long: MIQSFTRLAVADNSGAKELMCIKVLGGSKRRYASLGDIIVCSVKKALPNGKIKKGQVVKAVVVRTKKEVQRANGSLIRFDENAAVILDNKKEPVGTRIFGPVGREVRYANFMKIVSLAPEVL.

It belongs to the universal ribosomal protein uL14 family. Part of the 50S ribosomal subunit. Forms a cluster with proteins L3 and L19. In the 70S ribosome, L14 and L19 interact and together make contacts with the 16S rRNA in bridges B5 and B8.

Binds to 23S rRNA. Forms part of two intersubunit bridges in the 70S ribosome. The polypeptide is Large ribosomal subunit protein uL14 (Campylobacter fetus subsp. fetus (strain 82-40)).